Reading from the N-terminus, the 208-residue chain is Uridine kinase (208 aa).

Residue 12 to 19 (GGSGGGKT) coordinates ATP.

Belongs to the uridine kinase family.

Its subcellular location is the cytoplasm. The catalysed reaction is uridine + ATP = UMP + ADP + H(+). It catalyses the reaction cytidine + ATP = CMP + ADP + H(+). It functions in the pathway pyrimidine metabolism; CTP biosynthesis via salvage pathway; CTP from cytidine: step 1/3. Its pathway is pyrimidine metabolism; UMP biosynthesis via salvage pathway; UMP from uridine: step 1/1. The chain is Uridine kinase from Streptococcus pyogenes serotype M18 (strain MGAS8232).